A 394-amino-acid polypeptide reads, in one-letter code: Phosphopentomutase (394 aa).

Mn(2+) is bound by residues D13, D286, H291, D327, H328, and H339.

It belongs to the phosphopentomutase family. Requires Mn(2+) as cofactor.

The protein localises to the cytoplasm. The enzyme catalyses 2-deoxy-alpha-D-ribose 1-phosphate = 2-deoxy-D-ribose 5-phosphate. It carries out the reaction alpha-D-ribose 1-phosphate = D-ribose 5-phosphate. It functions in the pathway carbohydrate degradation; 2-deoxy-D-ribose 1-phosphate degradation; D-glyceraldehyde 3-phosphate and acetaldehyde from 2-deoxy-alpha-D-ribose 1-phosphate: step 1/2. In terms of biological role, isomerase that catalyzes the conversion of deoxy-ribose 1-phosphate (dRib-1-P) and ribose 1-phosphate (Rib-1-P) to deoxy-ribose 5-phosphate (dRib-5-P) and ribose 5-phosphate (Rib-5-P), respectively. The polypeptide is Phosphopentomutase (Bacillus cereus (strain B4264)).